Reading from the N-terminus, the 724-residue chain is Catalase-peroxidase (724 aa).

Residues 98 to 226 (WHAAGSYRTA…LAAVQMGLIY (129 aa)) constitute a cross-link (tryptophyl-tyrosyl-methioninium (Trp-Tyr) (with M-252)). The active-site Proton acceptor is His99. Residues 226-252 (YVNPQGVNGEPDPLRTALHVRETFARM) constitute a cross-link (tryptophyl-tyrosyl-methioninium (Tyr-Met) (with W-98)). His267 provides a ligand contact to heme b.

The protein belongs to the peroxidase family. Peroxidase/catalase subfamily. In terms of assembly, homodimer or homotetramer. Requires heme b as cofactor. Post-translationally, formation of the three residue Trp-Tyr-Met cross-link is important for the catalase, but not the peroxidase activity of the enzyme.

The enzyme catalyses H2O2 + AH2 = A + 2 H2O. It carries out the reaction 2 H2O2 = O2 + 2 H2O. Functionally, bifunctional enzyme with both catalase and broad-spectrum peroxidase activity. This Cereibacter sphaeroides (strain ATCC 17025 / ATH 2.4.3) (Rhodobacter sphaeroides) protein is Catalase-peroxidase.